Here is a 447-residue protein sequence, read N- to C-terminus: Phosphoglucosamine mutase (447 aa).

Catalysis depends on Ser102, which acts as the Phosphoserine intermediate. The Mg(2+) site is built by Ser102, Asp241, Asp243, and Asp245. Phosphoserine is present on Ser102.

The protein belongs to the phosphohexose mutase family. It depends on Mg(2+) as a cofactor. In terms of processing, activated by phosphorylation.

It catalyses the reaction alpha-D-glucosamine 1-phosphate = D-glucosamine 6-phosphate. Functionally, catalyzes the conversion of glucosamine-6-phosphate to glucosamine-1-phosphate. This is Phosphoglucosamine mutase from Pseudomonas syringae pv. tomato (strain ATCC BAA-871 / DC3000).